Here is a 487-residue protein sequence, read N- to C-terminus: GTSTVALIAVIISSILYLLFGGSGHKNLPPGPKPWPIVGNLLQLGEKPHAQFAELAQTYGDIFTLKMGTETVVVASTSSAASEILKTHDRILSARYVFQSFRVKGHVENSIVWSDCTETWKNLRKVCRTELFTQKMIESQAHVREKKCEEMVEYLMKKQGEEVKIVEVIFGTLVNIFGNLIFSQNIFELGDPNSGSSEFKEYLWRMLELGNSTNPADYFPMLGKFDLFGQRKEVAECLKGIYAIWGAMLQERKLAKKVDGYKSKNDFVDVCLDSGLNDYQINALLMELFGAGTETSASTIEWAMTELTKNPKITAKIRSEIQTVVGERSVKESDFPNLPYLEATVKETLRLHPPTPLLLPRRALETCTILNYTIPKDCQIMVNAWGIGRDPKTWTDPLTFSPERFLNSSVDFRGNDFSLIPFGAGRRICPGLPIANQFIALLVATFVQNLDWCLPNGMSVDHLIVEEKFGLTLQKEPPLFIVPKSRV.

The chain crosses the membrane as a helical span at residues 4 to 24 (TVALIAVIISSILYLLFGGSG). Cys-429 lines the heme pocket.

The protein belongs to the cytochrome P450 family. The cofactor is heme.

It localises to the endoplasmic reticulum membrane. Its subcellular location is the microsome membrane. The enzyme catalyses (S)-N-methylcoclaurine + reduced [NADPH--hemoprotein reductase] + O2 = (S)-3'-hydroxy-N-methylcoclaurine + oxidized [NADPH--hemoprotein reductase] + H2O + H(+). It functions in the pathway alkaloid biosynthesis; (S)-reticuline biosynthesis; (S)-reticuline from (S)-norcoclaurine: step 3/4. Functionally, 3'-hydroxylation of (S)-N-methylcoclaurine. The chain is (S)-N-methylcoclaurine 3'-hydroxylase isozyme 1 (CYP80B1) from Eschscholzia californica (California poppy).